We begin with the raw amino-acid sequence, 224 residues long: Superoxide dismutase [Mn], mitochondrial (224 aa).

A mitochondrion-targeting transit peptide spans 1-20; it reads MLLARAFARRSLRAGLWCRQ. Mn(2+) contacts are provided by histidine 46, histidine 94, aspartate 177, and histidine 181.

This sequence belongs to the iron/manganese superoxide dismutase family. In terms of assembly, homotetramer. Mn(2+) is required as a cofactor.

The protein localises to the mitochondrion matrix. The enzyme catalyses 2 superoxide + 2 H(+) = H2O2 + O2. In terms of biological role, destroys superoxide anion radicals which are normally produced within the cells and which are toxic to biological systems. In Charybdis feriata (Crucifix crab), this protein is Superoxide dismutase [Mn], mitochondrial.